The primary structure comprises 331 residues: Rho GTPase-activating protein 5 (331 aa).

The 14-residue stretch at 3-16 (IGGPTNIRHVAHVT) folds into the CRIB domain. The 178-residue stretch at 48–225 (VSTESMQLSY…LLKSLTEKTV (178 aa)) folds into the Rho-GAP domain. A compositionally biased stretch (basic and acidic residues) spans 227-251 (EREASSSVVDRRCSKEAEDGEKEKD). Residues 227–331 (EREASSSVVD…VQPPICSSNP (105 aa)) form a disordered region. Positions 252 to 277 (NEEEEEDEEEEEEEEDEDEDEEEEGD) are enriched in acidic residues.

As to expression, expressed in differentiating xylem cells.

The protein localises to the cell membrane. Its function is as follows. Acts as a GTPase activator for the Rac-type GTPase by converting it to an inactive GDP-bound state. The chain is Rho GTPase-activating protein 5 (ROPGAP5) from Arabidopsis thaliana (Mouse-ear cress).